Here is an 824-residue protein sequence, read N- to C-terminus: Acyl-homoserine lactone acylase QuiP (824 aa).

The first 26 residues, 1–26 (MASPALRHFLPRFGAAAAAASFLSLA), serve as a signal peptide directing secretion. S264 acts as the Nucleophile in catalysis.

The protein belongs to the peptidase S45 family. As to quaternary structure, heterodimer of an alpha subunit and a beta subunit processed from the same precursor.

The protein resides in the periplasm. It catalyses the reaction an N-acyl-L-homoserine lactone + H2O = L-homoserine lactone + a carboxylate. Catalyzes the deacylation of acyl-homoserine lactone (AHL or acyl-HSL), releasing homoserine lactone (HSL) and the corresponding fatty acid. Possesses a specificity for the degradation of long-chain acyl-HSLs (side chains of seven or more carbons in length). The chain is Acyl-homoserine lactone acylase QuiP (quiP) from Pseudomonas syringae pv. tomato (strain ATCC BAA-871 / DC3000).